The chain runs to 247 residues: MSVLPCSINTLKVLYDISGVEVGQHFYWQIGGFQVHAQVLITSWVVIAILLGSATIAVRNPQTIPTDGQNFFEYVLEFIRDLSKTQIGEEYGPWVPFIGTMFLFIFVSNWSGALLPWKIIQLPHGELAAPTNDINTTVALALLTSVAYFYAGLTKKGLGYFGKYIQPTPILLPINILEDFTKPLSLSFRLFGNILADELVVVVLVSLVPSVVPIPVMFLGLFTSGIQALIFATLAAAYIGESMEGHH.

The next 5 helical transmembrane spans lie at 38-58 (QVLITSWVVIAILLGSATIAV), 95-115 (VPFIGTMFLFIFVSNWSGALL), 134-154 (INTTVALALLTSVAYFYAGLT), 199-219 (LVVVVLVSLVPSVVPIPVMFL), and 220-240 (GLFTSGIQALIFATLAAAYIG).

This sequence belongs to the ATPase A chain family. F-type ATPases have 2 components, CF(1) - the catalytic core - and CF(0) - the membrane proton channel. CF(1) has five subunits: alpha(3), beta(3), gamma(1), delta(1), epsilon(1). CF(0) has four main subunits: a, b, b' and c.

The protein localises to the plastid. The protein resides in the chloroplast thylakoid membrane. Its function is as follows. Key component of the proton channel; it plays a direct role in the translocation of protons across the membrane. The polypeptide is ATP synthase subunit a, chloroplastic (Buxus microphylla (Littleleaf boxwood)).